The primary structure comprises 287 residues: Prepilin leader peptidase/N-methyltransferase (287 aa).

6 helical membrane passes run 10–30 (LGFP…NVVI), 101–121 (ISIQ…ASVW), 125–145 (FGWQ…MSGI), 177–197 (KPAL…WWLF), 226–246 (ILPI…IWLF), and 253–273 (ATPI…FFWG).

This sequence belongs to the peptidase A24 family.

Its subcellular location is the cell inner membrane. The catalysed reaction is Typically cleaves a -Gly-|-Phe- bond to release an N-terminal, basic peptide of 5-8 residues from type IV prepilin, and then N-methylates the new N-terminal amino group, the methyl donor being S-adenosyl-L-methionine.. In terms of biological role, plays an essential role in type IV pili and type II pseudopili formation by proteolytically removing the leader sequence from substrate proteins and subsequently monomethylating the alpha-amino group of the newly exposed N-terminal phenylalanine. The chain is Prepilin leader peptidase/N-methyltransferase (xpsO) from Xanthomonas campestris pv. campestris (strain ATCC 33913 / DSM 3586 / NCPPB 528 / LMG 568 / P 25).